A 569-amino-acid polypeptide reads, in one-letter code: Endo-1,4-beta-xylanase 5 (569 aa).

A signal peptide spans 1-25 (MKNINNGFFLCMLLLLWCFVHSGIS). Asn197, Asn261, and Asn307 each carry an N-linked (GlcNAc...) asparagine glycan. The GH10 domain maps to 209 to 500 (EQTKPSFLLG…NTATGDVIDK (292 aa)). Glu332 acts as the Proton donor in catalysis. The N-linked (GlcNAc...) asparagine glycan is linked to Asn346. Residue Glu439 is the Nucleophile of the active site. N-linked (GlcNAc...) asparagine glycans are attached at residues Asn490, Asn536, and Asn544.

This sequence belongs to the glycosyl hydrolase 10 (cellulase F) family.

The enzyme catalyses Endohydrolysis of (1-&gt;4)-beta-D-xylosidic linkages in xylans.. Its pathway is glycan degradation; xylan degradation. Functionally, binds to and hydrolyzes insoluble and soluble xylan substrates. The protein is Endo-1,4-beta-xylanase 5 of Arabidopsis thaliana (Mouse-ear cress).